The following is a 270-amino-acid chain: Fluoride-specific ion channel FluC 2 (270 aa).

4 consecutive transmembrane segments (helical) span residues 4-24 (IIIL…FIML), 35-55 (LDIL…TALY), 67-87 (IIGT…YGSV), and 96-116 (AFLI…VAVL). Na(+)-binding residues include Gly74 and Ser77.

It belongs to the fluoride channel Fluc/FEX (TC 1.A.43) family.

It is found in the cell inner membrane. The enzyme catalyses fluoride(in) = fluoride(out). Na(+) is not transported, but it plays an essential structural role and its presence is essential for fluoride channel function. Fluoride-specific ion channel. Important for reducing fluoride concentration in the cell, thus reducing its toxicity. This Brucella melitensis biotype 1 (strain ATCC 23456 / CCUG 17765 / NCTC 10094 / 16M) protein is Fluoride-specific ion channel FluC 2.